Consider the following 476-residue polypeptide: Glutamate--tRNA ligase (476 aa).

A 'HIGH' region motif is present at residues 9 to 19 (PSPTGTLHIGT). Positions 248-252 (KLSKR) match the 'KMSKS' region motif. Lys251 is a binding site for ATP.

Belongs to the class-I aminoacyl-tRNA synthetase family. Glutamate--tRNA ligase type 1 subfamily. Monomer.

The protein resides in the cytoplasm. It carries out the reaction tRNA(Glu) + L-glutamate + ATP = L-glutamyl-tRNA(Glu) + AMP + diphosphate. In terms of biological role, catalyzes the attachment of glutamate to tRNA(Glu) in a two-step reaction: glutamate is first activated by ATP to form Glu-AMP and then transferred to the acceptor end of tRNA(Glu). This chain is Glutamate--tRNA ligase, found in Prochlorococcus marinus (strain MIT 9303).